Here is a 343-residue protein sequence, read N- to C-terminus: Methionine import ATP-binding protein MetN (343 aa).

An ABC transporter domain is found at 2–241 (IKLSNITKVF…PKTPLAQKFI (240 aa)). ATP is bound at residue 38 to 45 (GASGAGKS).

It belongs to the ABC transporter superfamily. Methionine importer (TC 3.A.1.24) family. In terms of assembly, the complex is composed of two ATP-binding proteins (MetN), two transmembrane proteins (MetI) and a solute-binding protein (MetQ).

The protein localises to the cell inner membrane. The enzyme catalyses L-methionine(out) + ATP + H2O = L-methionine(in) + ADP + phosphate + H(+). It catalyses the reaction D-methionine(out) + ATP + H2O = D-methionine(in) + ADP + phosphate + H(+). Part of the ABC transporter complex MetNIQ involved in methionine import. Responsible for energy coupling to the transport system. The chain is Methionine import ATP-binding protein MetN from Escherichia coli O6:K15:H31 (strain 536 / UPEC).